A 23-amino-acid polypeptide reads, in one-letter code: Acidic phospholipase CHA-E6a (23 aa).

It belongs to the phospholipase A2 family. Group II subfamily. D49 sub-subfamily. Ca(2+) is required as a cofactor. Post-translationally, contains 7 disulfide bonds. Expressed by the venom gland.

Its subcellular location is the secreted. It catalyses the reaction a 1,2-diacyl-sn-glycero-3-phosphocholine + H2O = a 1-acyl-sn-glycero-3-phosphocholine + a fatty acid + H(+). Functionally, snake venom phospholipase A2 (PLA2) that shows high lipolytic (1048 umol/mg/min) and weak ADP-induced platelet aggregation activities. Also shows weak anticoagulant activity (IC(50) is less than 1.0 uM). PLA2 catalyzes the calcium-dependent hydrolysis of the 2-acyl groups in 3-sn-phosphoglycerides. This Crotalus horridus (Timber rattlesnake) protein is Acidic phospholipase CHA-E6a.